The sequence spans 170 residues: Adenine phosphoribosyltransferase (170 aa).

The protein belongs to the purine/pyrimidine phosphoribosyltransferase family. In terms of assembly, homodimer.

It is found in the cytoplasm. It carries out the reaction AMP + diphosphate = 5-phospho-alpha-D-ribose 1-diphosphate + adenine. Its pathway is purine metabolism; AMP biosynthesis via salvage pathway; AMP from adenine: step 1/1. Catalyzes a salvage reaction resulting in the formation of AMP, that is energically less costly than de novo synthesis. The sequence is that of Adenine phosphoribosyltransferase from Pseudothermotoga lettingae (strain ATCC BAA-301 / DSM 14385 / NBRC 107922 / TMO) (Thermotoga lettingae).